The primary structure comprises 82 residues: Photosystem I iron-sulfur center (82 aa).

4Fe-4S ferredoxin-type domains lie at 2–31 (AHTV…MVPW) and 40–69 (IAAA…IRVY). C11, C14, C17, C21, C49, C52, C55, and C59 together coordinate [4Fe-4S] cluster.

The cyanobacterial PSI reaction center is composed of one copy each of PsaA,B,C,D,E,F,I,J,K,L,M and X, and forms trimeric complexes. [4Fe-4S] cluster is required as a cofactor.

Its subcellular location is the cellular thylakoid membrane. The enzyme catalyses reduced [plastocyanin] + hnu + oxidized [2Fe-2S]-[ferredoxin] = oxidized [plastocyanin] + reduced [2Fe-2S]-[ferredoxin]. Functionally, apoprotein for the two 4Fe-4S centers FA and FB of photosystem I (PSI); essential for photochemical activity. FB is the terminal electron acceptor of PSI, donating electrons to ferredoxin. The C-terminus interacts with PsaA/B/D and helps assemble the protein into the PSI complex. Required for binding of PsaD and PsaE to PSI. PSI is a plastocyanin/cytochrome c6-ferredoxin oxidoreductase, converting photonic excitation into a charge separation, which transfers an electron from the donor P700 chlorophyll pair to the spectroscopically characterized acceptors A0, A1, FX, FA and FB in turn. This Synechococcus sp. (strain JA-3-3Ab) (Cyanobacteria bacterium Yellowstone A-Prime) protein is Photosystem I iron-sulfur center.